A 337-amino-acid polypeptide reads, in one-letter code: Holliday junction branch migration complex subunit RuvB (337 aa).

Residues 1–179 (MTHQVSVLHQ…FSFTGRVAYY (179 aa)) are large ATPase domain (RuvB-L). Residues leucine 18, arginine 19, glycine 60, lysine 63, threonine 64, serine 65, 126–128 (EDY), arginine 169, tyrosine 179, and arginine 216 contribute to the ATP site. Threonine 64 contributes to the Mg(2+) binding site. The small ATPAse domain (RuvB-S) stretch occupies residues 180–250 (SDEDLATILR…VAEKALAMLL (71 aa)). The head domain (RuvB-H) stretch occupies residues 253-337 (EWGLNEIDIK…DNLQSLGEEK (85 aa)). DNA contacts are provided by lysine 308 and arginine 313.

It belongs to the RuvB family. As to quaternary structure, homohexamer. Forms an RuvA(8)-RuvB(12)-Holliday junction (HJ) complex. HJ DNA is sandwiched between 2 RuvA tetramers; dsDNA enters through RuvA and exits via RuvB. An RuvB hexamer assembles on each DNA strand where it exits the tetramer. Each RuvB hexamer is contacted by two RuvA subunits (via domain III) on 2 adjacent RuvB subunits; this complex drives branch migration. In the full resolvosome a probable DNA-RuvA(4)-RuvB(12)-RuvC(2) complex forms which resolves the HJ.

Its subcellular location is the cytoplasm. It carries out the reaction ATP + H2O = ADP + phosphate + H(+). In terms of biological role, the RuvA-RuvB-RuvC complex processes Holliday junction (HJ) DNA during genetic recombination and DNA repair, while the RuvA-RuvB complex plays an important role in the rescue of blocked DNA replication forks via replication fork reversal (RFR). RuvA specifically binds to HJ cruciform DNA, conferring on it an open structure. The RuvB hexamer acts as an ATP-dependent pump, pulling dsDNA into and through the RuvAB complex. RuvB forms 2 homohexamers on either side of HJ DNA bound by 1 or 2 RuvA tetramers; 4 subunits per hexamer contact DNA at a time. Coordinated motions by a converter formed by DNA-disengaged RuvB subunits stimulates ATP hydrolysis and nucleotide exchange. Immobilization of the converter enables RuvB to convert the ATP-contained energy into a lever motion, pulling 2 nucleotides of DNA out of the RuvA tetramer per ATP hydrolyzed, thus driving DNA branch migration. The RuvB motors rotate together with the DNA substrate, which together with the progressing nucleotide cycle form the mechanistic basis for DNA recombination by continuous HJ branch migration. Branch migration allows RuvC to scan DNA until it finds its consensus sequence, where it cleaves and resolves cruciform DNA. This is Holliday junction branch migration complex subunit RuvB from Chlamydia abortus (strain DSM 27085 / S26/3) (Chlamydophila abortus).